Here is a 159-residue protein sequence, read N- to C-terminus: Ribosomal RNA large subunit methyltransferase H (159 aa).

S-adenosyl-L-methionine is bound by residues Ile75, Gly108, and 127-132 (FGRMTL).

This sequence belongs to the RNA methyltransferase RlmH family. As to quaternary structure, homodimer.

The protein localises to the cytoplasm. The catalysed reaction is pseudouridine(1915) in 23S rRNA + S-adenosyl-L-methionine = N(3)-methylpseudouridine(1915) in 23S rRNA + S-adenosyl-L-homocysteine + H(+). Specifically methylates the pseudouridine at position 1915 (m3Psi1915) in 23S rRNA. This is Ribosomal RNA large subunit methyltransferase H from Lactococcus lactis subsp. lactis (strain IL1403) (Streptococcus lactis).